The chain runs to 296 residues: Nucleotide-binding protein SPCG_1551 (296 aa).

ATP is bound at residue 13–20; sequence GMSGAGKT. 63–66 lines the GTP pocket; that stretch reads DMRS.

The protein belongs to the RapZ-like family.

Functionally, displays ATPase and GTPase activities. This is Nucleotide-binding protein SPCG_1551 from Streptococcus pneumoniae (strain CGSP14).